We begin with the raw amino-acid sequence, 93 residues long: Cobalt transport protein CbiN (93 aa).

The next 2 membrane-spanning stretches (helical) occupy residues Leu5–Gly25 and Leu63–Cys83.

This sequence belongs to the CbiN family. As to quaternary structure, forms an energy-coupling factor (ECF) transporter complex composed of an ATP-binding protein (A component, CbiO), a transmembrane protein (T component, CbiQ) and 2 possible substrate-capture proteins (S components, CbiM and CbiN) of unknown stoichimetry.

The protein resides in the cell inner membrane. The protein operates within cofactor biosynthesis; adenosylcobalamin biosynthesis. Its function is as follows. Part of the energy-coupling factor (ECF) transporter complex CbiMNOQ involved in cobalt import. The protein is Cobalt transport protein CbiN of Salmonella arizonae (strain ATCC BAA-731 / CDC346-86 / RSK2980).